The sequence spans 234 residues: Large ribosomal subunit protein uL1 (234 aa).

Belongs to the universal ribosomal protein uL1 family. Part of the 50S ribosomal subunit.

Binds directly to 23S rRNA. The L1 stalk is quite mobile in the ribosome, and is involved in E site tRNA release. Functionally, protein L1 is also a translational repressor protein, it controls the translation of the L11 operon by binding to its mRNA. The chain is Large ribosomal subunit protein uL1 from Klebsiella pneumoniae (strain 342).